A 319-amino-acid chain; its full sequence is 33 kDa chaperonin (319 aa).

Positions 1–10 (MTDASGSERL) are enriched in basic and acidic residues. Positions 1-25 (MTDASGSERLKRAKGISEGTPSSLP) are disordered. Disulfide bonds link Cys-261-Cys-263 and Cys-294-Cys-297.

It belongs to the HSP33 family. Under oxidizing conditions two disulfide bonds are formed involving the reactive cysteines. Under reducing conditions zinc is bound to the reactive cysteines and the protein is inactive.

Its subcellular location is the cytoplasm. In terms of biological role, redox regulated molecular chaperone. Protects both thermally unfolding and oxidatively damaged proteins from irreversible aggregation. Plays an important role in the bacterial defense system toward oxidative stress. The protein is 33 kDa chaperonin of Synechococcus sp. (strain JA-2-3B'a(2-13)) (Cyanobacteria bacterium Yellowstone B-Prime).